A 78-amino-acid polypeptide reads, in one-letter code: uncharacterized protein (78 aa).

The chain crosses the membrane as a helical span at residues serine 13 to alanine 33.

It localises to the membrane. This is an uncharacterized protein from Methanocaldococcus jannaschii (strain ATCC 43067 / DSM 2661 / JAL-1 / JCM 10045 / NBRC 100440) (Methanococcus jannaschii).